The chain runs to 237 residues: Undecaprenyl-diphosphatase (237 aa).

Helical transmembrane passes span 38–58 (QTAVLHLGTLVSVVLFAFDGI), 65–85 (WRIILNLIVSTIPAGVFGVLF), 92–112 (LFSSPRFLPLFFSVTALILMF), 126–146 (MSFLDALLVGIAQLFALFPGI), 166–186 (ALQYSFLMSIPVVLGAGILGL), 191–211 (ITILAPIFAFLSGLFALYVLS), and 217–237 (GKIWQFSYYCLFVAILSYLVG).

It belongs to the UppP family.

It localises to the cell inner membrane. The enzyme catalyses di-trans,octa-cis-undecaprenyl diphosphate + H2O = di-trans,octa-cis-undecaprenyl phosphate + phosphate + H(+). In terms of biological role, catalyzes the dephosphorylation of undecaprenyl diphosphate (UPP). Confers resistance to bacitracin. In Thermotoga petrophila (strain ATCC BAA-488 / DSM 13995 / JCM 10881 / RKU-1), this protein is Undecaprenyl-diphosphatase.